The primary structure comprises 485 residues: E3 ubiquitin-protein ligase rnf8 (485 aa).

In terms of domain architecture, FHA spans 43 to 97; that stretch reads VSVGRGLNVTHQILSSSCPLMISRIHCVFKLNEGRQWTVTDNKSLNGVWVNGKRI. The interval 150–232 is disordered; that stretch reads AASLSQKLKN…SSTCSDSSQH (83 aa). Residues 199-219 show a composition bias toward basic and acidic residues; that stretch reads GERRETLKLSSRPLEEDRDKA. Low complexity predominate over residues 221-230; it reads SSSSTCSDSS. Residues 392–430 form an RING-type zinc finger; the sequence is CSICSELFIEAVTLNCAHSFCQHCISEWRNRKDKCPMCW.

This sequence belongs to the RNF8 family. Homodimer. Forms a E2-E3 ubiquitin ligase complex composed of the rnf8 homodimer and a E2 heterodimer of ube2n and ube2v2.

The protein resides in the nucleus. The catalysed reaction is S-ubiquitinyl-[E2 ubiquitin-conjugating enzyme]-L-cysteine + [acceptor protein]-L-lysine = [E2 ubiquitin-conjugating enzyme]-L-cysteine + N(6)-ubiquitinyl-[acceptor protein]-L-lysine.. Its pathway is protein modification; protein ubiquitination. In terms of biological role, E3 ubiquitin-protein ligase that plays a key role in DNA damage signaling via 2 distinct roles: by mediating the 'Lys-63'-linked ubiquitination of histones H2A and H2AX and promoting the recruitment of DNA repair proteins at double-strand breaks (DSBs) sites, and by catalyzing 'Lys-48'-linked ubiquitination to remove target proteins from DNA damage sites. Following DNA DSBs, it is recruited to the sites of damage by ATM-phosphorylated mdc1 and catalyzes the 'Lys-63'-linked ubiquitination of histones H2A and H2AX. H2A ubiquitination also mediates the ATM-dependent transcriptional silencing at regions flanking DSBs in cis, a mechanism to avoid collision between transcription and repair intermediates. Also catalyzes the formation of 'Lys-48'-linked polyubiquitin chains, leading to degradation of substrate proteins. In addition to its function in damage signaling, also plays a role in higher-order chromatin structure by mediating extensive chromatin decondensation. In Danio rerio (Zebrafish), this protein is E3 ubiquitin-protein ligase rnf8.